The primary structure comprises 397 residues: Enoyl-[acyl-carrier-protein] reductase [NADH] (397 aa).

NAD(+) is bound by residues 48-53, 74-75, 111-112, and 139-140; these read GASTGY, FE, DA, and LA. Position 224 (Y224) interacts with substrate. Y234 functions as the Proton donor in the catalytic mechanism. Residues K243 and 272–274 contribute to the NAD(+) site; that span reads VVT.

This sequence belongs to the TER reductase family. Monomer.

The enzyme catalyses a 2,3-saturated acyl-[ACP] + NAD(+) = a (2E)-enoyl-[ACP] + NADH + H(+). Its pathway is lipid metabolism; fatty acid biosynthesis. Involved in the final reduction of the elongation cycle of fatty acid synthesis (FAS II). Catalyzes the reduction of a carbon-carbon double bond in an enoyl moiety that is covalently linked to an acyl carrier protein (ACP). This is Enoyl-[acyl-carrier-protein] reductase [NADH] from Pseudomonas fluorescens (strain SBW25).